A 226-amino-acid polypeptide reads, in one-letter code: Uracil-DNA glycosylase (226 aa).

Aspartate 64 serves as the catalytic Proton acceptor.

The protein belongs to the uracil-DNA glycosylase (UDG) superfamily. UNG family.

Its subcellular location is the cytoplasm. The catalysed reaction is Hydrolyzes single-stranded DNA or mismatched double-stranded DNA and polynucleotides, releasing free uracil.. Its function is as follows. Excises uracil residues from the DNA which can arise as a result of misincorporation of dUMP residues by DNA polymerase or due to deamination of cytosine. This is Uracil-DNA glycosylase from Vibrio campbellii (strain ATCC BAA-1116).